A 244-amino-acid polypeptide reads, in one-letter code: MAGTSSEAEAEALAAARERSRLFLSGLELVQQGAEARVFRGRFQGRAAVVKHRFPKSYRHPELEARLGRRRTVQEARALLRCRRAGIAAPVVFFVDYASNCLYMEEIEDSVTVRDYIQSTMETEKDPQCLLDLARRMGQVLAGMHDQDLIHGDLTTSNMLLRRPLAQLHIVLIDFGLSFVSGLPEDKGVDLYVLEKAFLSTHPHTETAFEAFLKSYGASSKKSSPVLKKLDEVRLRGRKRSMVG.

The Protein kinase domain occupies 24-244; the sequence is LSGLELVQQG…LRGRKRSMVG (221 aa). Position 25 is a phosphoserine (serine 25). Residues 30–38 and lysine 51 contribute to the ATP site; that span reads VQQGAEARV. The Nuclear localization signal signature appears at 69-86; sequence RRRTVQEARALLRCRRAG. Aspartate 153 serves as the catalytic Proton acceptor.

Belongs to the protein kinase superfamily. BUD32 family. As to quaternary structure, component of the EKC/KEOPS complex composed of at least GON7, TP53RK, TPRKB, OSGEP and LAGE3; the whole complex dimerizes.

It is found in the nucleus. It carries out the reaction L-seryl-[protein] + ATP = O-phospho-L-seryl-[protein] + ADP + H(+). The enzyme catalyses L-threonyl-[protein] + ATP = O-phospho-L-threonyl-[protein] + ADP + H(+). Its function is as follows. Component of the EKC/KEOPS complex that is required for the formation of a threonylcarbamoyl group on adenosine at position 37 (t(6)A37) in tRNAs that read codons beginning with adenine. The complex is probably involved in the transfer of the threonylcarbamoyl moiety of threonylcarbamoyl-AMP (TC-AMP) to the N6 group of A37. TP53RK has ATPase activity in the context of the EKC/KEOPS complex and likely plays a supporting role to the catalytic subunit OSGEP. Atypical protein kinase that phosphorylates 'Ser-15' of p53/TP53 protein and may therefore participate in its activation. This Mus musculus (Mouse) protein is EKC/KEOPS complex subunit Tp53rkb.